Reading from the N-terminus, the 92-residue chain is Small ribosomal subunit protein uS19c (92 aa).

This sequence belongs to the universal ribosomal protein uS19 family.

The protein resides in the plastid. Its subcellular location is the chloroplast. In terms of biological role, protein S19 forms a complex with S13 that binds strongly to the 16S ribosomal RNA. The chain is Small ribosomal subunit protein uS19c from Fagopyrum esculentum subsp. ancestrale (Wild buckwheat).